Consider the following 427-residue polypeptide: 11-beta-hydroxysteroid dehydrogenase type 2 (427 aa).

82 to 111 (TRAVLITGCDSGFGNATAKKLDAMGFTVLA) is a binding site for NAD(+). A substrate-binding site is contributed by serine 219. Tyrosine 232 functions as the Proton acceptor in the catalytic mechanism.

It belongs to the short-chain dehydrogenases/reductases (SDR) family. As to quaternary structure, interacts with ligand-free cytoplasmic NR3C2. In terms of tissue distribution, highly expressed in the kidney and adrenal and at lower levels in the colon.

The protein resides in the microsome. The protein localises to the endoplasmic reticulum. It catalyses the reaction an 11beta-hydroxysteroid + NAD(+) = an 11-oxosteroid + NADH + H(+). The enzyme catalyses corticosterone + NAD(+) = 11-dehydrocorticosterone + NADH + H(+). It carries out the reaction cortisol + NAD(+) = cortisone + NADH + H(+). The catalysed reaction is 11beta,17beta-dihydroxyandrost-4-ene-3-one + NAD(+) = 17beta-hydroxyandrost-4-ene-3,11-dione + NADH + H(+). It catalyses the reaction 11beta-hydroxyandrost-4-ene-3,17-dione + NAD(+) = androst-4-ene-3,11,17-trione + NADH + H(+). Its pathway is steroid metabolism. Its activity is regulated as follows. Inhibited by glycyrrhetinic acid, carbenoloxone, 11-alpha-OH-progesterone and 11-beta-OH-progesterone. Functionally, catalyzes the conversion of biologically active 11beta-hydroxyglucocorticoids (11beta-hydroxysteroid) such as cortisol, to inactive 11-ketoglucocorticoids (11-oxosteroid) such as cortisone, in the presence of NAD(+). Functions as a dehydrogenase (oxidase), thereby decreasing the concentration of active glucocorticoids, thus protecting the nonselective mineralocorticoid receptor from occupation by glucocorticoids. Plays an important role in maintaining glucocorticoids balance during preimplantation and protects the fetus from excessive maternal corticosterone exposure. Catalyzes the oxidation of 11beta-hydroxytestosterone (11beta,17beta-dihydroxyandrost-4-ene-3-one) to 11-ketotestosterone (17beta-hydroxyandrost-4-ene-3,11-dione), a major bioactive androgen. Catalyzes the conversion of 11beta-hydroxyandrostenedione (11beta-hydroxyandrost-4-ene-3,17-dione) to 11-ketoandrostenedione (androst-4-ene-3,11,17-trione), which can be further metabolized to 11-ketotestosterone. Converts 7-beta-25-dihydroxycholesterol to 7-oxo-25-hydroxycholesterol in vitro. 7-beta-25-dihydroxycholesterol (not 7-oxo-25-hydroxycholesterol) acts as a ligand for the G-protein-coupled receptor (GPCR) Epstein-Barr virus-induced gene 2 (EBI2) and may thereby regulate immune cell migration. May protect ovulating oocytes and fertilizing spermatozoa from the adverse effects of cortisol. This chain is 11-beta-hydroxysteroid dehydrogenase type 2 (HSD11B2), found in Ovis aries (Sheep).